A 222-amino-acid chain; its full sequence is Large ribosomal subunit protein uL4 (222 aa).

A disordered region spans residues 50–72; the sequence is TRGRSEVSHSTKKPFRQKGTGNA.

Belongs to the universal ribosomal protein uL4 family. As to quaternary structure, part of the 50S ribosomal subunit.

One of the primary rRNA binding proteins, this protein initially binds near the 5'-end of the 23S rRNA. It is important during the early stages of 50S assembly. It makes multiple contacts with different domains of the 23S rRNA in the assembled 50S subunit and ribosome. Its function is as follows. Forms part of the polypeptide exit tunnel. This is Large ribosomal subunit protein uL4 from Chlamydia trachomatis serovar A (strain ATCC VR-571B / DSM 19440 / HAR-13).